The following is a 196-amino-acid chain: MDERRLKGKRRVQLGKYAAVRGRKEGRLPAVMYDHRGVSVPLELAQQDFDRLFRALTRSTVLSLELDGGEVFCVFVKDYQHNMVSDRVEHVDFYAVEESVPLRMRIRLQLCGSPEGVRYGARLEKGLSYIEVESLPRNLPDRVVLDISGLGAGDVRRVRDVPLPASVVVLSDPDAVIVALSSSASEAGSPAGARTG.

This sequence belongs to the bacterial ribosomal protein bL25 family. CTC subfamily. In terms of assembly, part of the 50S ribosomal subunit; part of the 5S rRNA/L5/L18/L25 subcomplex. Contacts the 5S rRNA. Binds to the 5S rRNA independently of L5 and L18.

This is one of the proteins that binds to the 5S RNA in the ribosome where it forms part of the central protuberance. This Treponema pallidum subsp. pallidum (strain SS14) protein is Large ribosomal subunit protein bL25.